A 268-amino-acid polypeptide reads, in one-letter code: Speedy protein E4A (268 aa).

2 disordered regions span residues 1 to 26 and 43 to 97; these read MGEG…LGFV and LCSE…LDSE. The span at 43–52 shows a compositional bias: polar residues; that stretch reads LCSEEQSPQP. A speedy/Ringo box; Required for CDK-binding region spans residues 134–265; the sequence is PEHHKVFTKL…DLWVWARDRT (132 aa).

It belongs to the Speedy/Ringo family. Interacts with CDK1. Does not interact with CDK2 in vivo. As to expression, testis-specific.

It is found in the nucleus. Promotes progression through the cell cycle via binding and activation of CDK1. The chain is Speedy protein E4A from Mus musculus (Mouse).